The sequence spans 489 residues: Palmitoyltransferase ZDHHC14 (489 aa).

Topologically, residues 1-60 (MPPGGGGPMKDCEYSQISTHSSSPMESPHKKKKIAARRKWEVFPGRNKFFCNGRIMMARQ) are cytoplasmic. A helical transmembrane segment spans residues 61-81 (TGVFYLTLILILVTSGLFFAF). The Lumenal segment spans residues 82 to 89 (DCRYLAEK). A helical transmembrane segment spans residues 90 to 110 (ITPAIPVVGGILFFFVMGTLL). Residues 111-208 (RTSFSDPGVL…GNCVGKRNYR (98 aa)) are Cytoplasmic-facing. The 51-residue stretch at 165–215 (KYCFTCKIFRPPRASHCSLCDNCVEQFDHHCPWVGNCVGKRNYRFFYMFIL) folds into the DHHC domain. The S-palmitoyl cysteine intermediate role is filled by Cys195. The helical transmembrane segment at 209-229 (FFYMFILSLSFLTVFIFAFVI) threads the bilayer. At 230 to 255 (THVIHRSQQKGFLDALKDSPASVLEA) the chain is on the lumenal side. The chain crosses the membrane as a helical span at residues 256 to 276 (VICFFSVWSIIGLSGFHTYLI). At 277–489 (SSNQTTNEDI…VRGLVKLSSV (213 aa)) the chain is on the cytoplasmic side. Positions 434–454 (HGGHQFLTPDEAPSPPRMLGA) are disordered. At Ser456 the chain carries Phosphoserine.

This sequence belongs to the DHHC palmitoyltransferase family. ERF2/ZDHHC9 subfamily.

The protein localises to the endoplasmic reticulum membrane. Its subcellular location is the golgi apparatus membrane. The catalysed reaction is L-cysteinyl-[protein] + hexadecanoyl-CoA = S-hexadecanoyl-L-cysteinyl-[protein] + CoA. Its function is as follows. Palmitoyltransferase that could catalyze the addition of palmitate onto various protein substrates. May have a palmitoyltransferase activity toward the beta-2 adrenergic receptor/ADRB2 and thereby regulate G protein-coupled receptor signaling. May play a role in cell differentiation and apoptosis. This is Palmitoyltransferase ZDHHC14 from Mus musculus (Mouse).